The primary structure comprises 501 residues: Cytochrome P450 71B3 (501 aa).

Residues 2 to 22 traverse the membrane as a helical segment; the sequence is SILLYFFFLPVILSLIFMKKF. A heme-binding site is contributed by Cys445.

It belongs to the cytochrome P450 family. Heme is required as a cofactor.

The protein resides in the membrane. The protein is Cytochrome P450 71B3 (CYP71B3) of Arabidopsis thaliana (Mouse-ear cress).